A 375-amino-acid polypeptide reads, in one-letter code: Outer membrane porin OmpD (375 aa).

A signal peptide spans 1–34 (MRKHAKKIIRIIKMKLKLVAVAVTSLLAAGVVNA).

Belongs to the Gram-negative porin family. Homotrimer. Mixed heterotrimers with other porins are also probable.

It is found in the cell outer membrane. In terms of biological role, forms pores that allow passive diffusion of small molecules across the outer membrane. In Salmonella typhimurium (strain SL1344), this protein is Outer membrane porin OmpD.